We begin with the raw amino-acid sequence, 630 residues long: Adagio-like protein 3 (630 aa).

Positions 54–126 constitute a PAS domain; sequence EDEAAAWEGR…PLVDPMVVSE (73 aa). Position 102 is an S-4a-FMN cysteine (C102). Residues 220–268 enclose the F-box domain; it reads YCCILQLSDEVLAHNILSRLSPRDVASIGSVCTRMHELTKNDHLRKMVC. 5 Kelch repeats span residues 380–430, 432–483, 485–537, 545–597, and 599–629; these read SWLV…CTLD, SKLV…SVFG, TKLF…RLDH, GRII…CVVG, and TRVLVLGGHTGEEWILNELHELCLASRPDED.

The protein belongs to the ADAGIO family. Post-translationally, FMN binds covalently to cysteine after exposure to blue light and is reversed in the dark.

It localises to the nucleus. It participates in protein modification; protein ubiquitination. Its function is as follows. Component of an E3 ubiquitin ligase complex that plays a central role in blue light-dependent circadian cycles. Acts as a blue light photoreceptor, due to the presence of FMN, that mediates light-regulated protein degradation of critical clock components by targeting them to the proteasome complex. The SCF(ADO3) E3 ubiquitin ligase complex is involved in the regulation of circadian clock-dependent processes including transition to flowering time, hypocotyl elongation, cotyledons and leaf movement rhythms. This is Adagio-like protein 3 from Oryza sativa subsp. japonica (Rice).